Here is a 465-residue protein sequence, read N- to C-terminus: 3-isopropylmalate dehydratase large subunit (465 aa).

[4Fe-4S] cluster is bound by residues cysteine 347, cysteine 407, and cysteine 410. Residues aspartate 416–histidine 443 form a disordered region.

It belongs to the aconitase/IPM isomerase family. LeuC type 1 subfamily. As to quaternary structure, heterodimer of LeuC and LeuD. It depends on [4Fe-4S] cluster as a cofactor.

It carries out the reaction (2R,3S)-3-isopropylmalate = (2S)-2-isopropylmalate. The protein operates within amino-acid biosynthesis; L-leucine biosynthesis; L-leucine from 3-methyl-2-oxobutanoate: step 2/4. Functionally, catalyzes the isomerization between 2-isopropylmalate and 3-isopropylmalate, via the formation of 2-isopropylmaleate. The sequence is that of 3-isopropylmalate dehydratase large subunit from Frankia alni (strain DSM 45986 / CECT 9034 / ACN14a).